We begin with the raw amino-acid sequence, 91 residues long: Small ribosomal subunit protein uS19 (91 aa).

This sequence belongs to the universal ribosomal protein uS19 family.

In terms of biological role, protein S19 forms a complex with S13 that binds strongly to the 16S ribosomal RNA. The polypeptide is Small ribosomal subunit protein uS19 (Synechococcus sp. (strain CC9311)).